The sequence spans 548 residues: Phenylalanine--tRNA ligase beta subunit (548 aa).

A B5 domain is found at 271-346 (LSEAAAKLDP…ISIGYEALGP (76 aa)). Residues D324, D330, E333, and D334 each coordinate Mg(2+).

It belongs to the phenylalanyl-tRNA synthetase beta subunit family. Type 2 subfamily. Tetramer of two alpha and two beta subunits. Mg(2+) serves as cofactor.

The protein resides in the cytoplasm. The catalysed reaction is tRNA(Phe) + L-phenylalanine + ATP = L-phenylalanyl-tRNA(Phe) + AMP + diphosphate + H(+). The chain is Phenylalanine--tRNA ligase beta subunit from Aeropyrum pernix (strain ATCC 700893 / DSM 11879 / JCM 9820 / NBRC 100138 / K1).